Reading from the N-terminus, the 282-residue chain is Bifunctional protein FolD (282 aa).

NADP(+)-binding positions include 164-166 (GAS), isoleucine 189, and isoleucine 230.

This sequence belongs to the tetrahydrofolate dehydrogenase/cyclohydrolase family. Homodimer.

It carries out the reaction (6R)-5,10-methylene-5,6,7,8-tetrahydrofolate + NADP(+) = (6R)-5,10-methenyltetrahydrofolate + NADPH. The catalysed reaction is (6R)-5,10-methenyltetrahydrofolate + H2O = (6R)-10-formyltetrahydrofolate + H(+). The protein operates within one-carbon metabolism; tetrahydrofolate interconversion. Catalyzes the oxidation of 5,10-methylenetetrahydrofolate to 5,10-methenyltetrahydrofolate and then the hydrolysis of 5,10-methenyltetrahydrofolate to 10-formyltetrahydrofolate. In Campylobacter jejuni subsp. jejuni serotype O:2 (strain ATCC 700819 / NCTC 11168), this protein is Bifunctional protein FolD.